Reading from the N-terminus, the 140-residue chain is Organic hydroperoxide resistance protein-like 1 (140 aa).

It belongs to the OsmC/Ohr family.

The chain is Organic hydroperoxide resistance protein-like 1 from Staphylococcus epidermidis (strain ATCC 35984 / DSM 28319 / BCRC 17069 / CCUG 31568 / BM 3577 / RP62A).